The chain runs to 447 residues: Hemogen (447 aa).

The disordered stretch occupies residues 1-91 (MDLGKDQSLS…EMKVELPSQL (91 aa)). A necessary for nuclear localization region spans residues 7-86 (QSLSKLHQTP…RQQNTEMKVE (80 aa)). Basic and acidic residues-rich tracts occupy residues 14–25 (QTPDHHQEESHV) and 35–49 (RNRE…EAQE). Over residues 59-78 (EKKHKRQRTGKRSERGRKRQ) the composition is skewed to basic residues. Phosphoserine occurs at positions 89 and 122. The tract at residues 137–156 (QESVTLQENSSEYQATAVQN) is disordered. Ser200 is subject to Phosphoserine. 2 disordered regions span residues 210-280 (AKVL…MAVP) and 306-337 (AMSK…PGSE). A Phosphothreonine modification is found at Thr217. Residues 306–316 (AMSKDPSHKTT) show a composition bias toward basic and acidic residues.

It localises to the nucleus. Regulates the proliferation and differentiation of hematopoietic cells. Overexpression block the TPA-induced megakaryocytic differentiation in the K562 cell model. May also prevent cell apoptosis through the activation of the nuclear factor-kappa B (NF-kB). This chain is Hemogen (HEMGN), found in Bos taurus (Bovine).